The sequence spans 278 residues: Gamma carbonic anhydrase 2, mitochondrial (278 aa).

A mitochondrion-targeting transit peptide spans 1–43 (MGTLGRAIYTVGNWIRGTGQALDRVGSLLQGSHRIEEHLSRHR). Residues 86–88 (RGD) and 101–102 (QD) each bind substrate. Positions 107, 130, and 135 each coordinate Zn(2+). Asparagine 209 serves as a coordination point for substrate.

This sequence belongs to the gamma-class carbonic anhydrase family. Homotrimer. Component of the mitochondrial oxidoreductase respiratory chain complex I; element of the extra matrix-exposed domain, which is attached to the membrane arm of this complex. Interacts with GAMMACAL1 and GAMMACAL2. Requires Zn(2+) as cofactor. Constitutively expressed in roots and leaves, with higher levels in flowers, particularly in tapetal tissue of anthers, inflorescence (IM) and floral meristems (FM).

The protein localises to the mitochondrion membrane. Functionally, enzyme involved in the catabolism of H(2)CO(3) but that does not mediates the reversible hydration of carbon dioxide. Mediates complex I assembly in mitochondria and respiration. Binds HCO(3)-. Required for male fertility during anther development and dehiscence to regulate the secondary thickenings of the endothecial cell wall, probably by modulating H(2)O(2)-dependent lignin polymerization. The sequence is that of Gamma carbonic anhydrase 2, mitochondrial (GAMMACA2) from Arabidopsis thaliana (Mouse-ear cress).